The following is a 176-amino-acid chain: Large ribosomal subunit protein uL22 (176 aa).

A disordered region spans residues 113 to 176 (VVESRPSKDQ…EISEAKGGSD (64 aa)). Residues 136-152 (SKAAATAPAKKSSASKA) show a composition bias toward low complexity. Basic and acidic residues predominate over residues 159–176 (TKAESKTSEISEAKGGSD).

It belongs to the universal ribosomal protein uL22 family. Part of the 50S ribosomal subunit.

Functionally, this protein binds specifically to 23S rRNA; its binding is stimulated by other ribosomal proteins, e.g. L4, L17, and L20. It is important during the early stages of 50S assembly. It makes multiple contacts with different domains of the 23S rRNA in the assembled 50S subunit and ribosome. The globular domain of the protein is located near the polypeptide exit tunnel on the outside of the subunit, while an extended beta-hairpin is found that lines the wall of the exit tunnel in the center of the 70S ribosome. This Mycobacterium ulcerans (strain Agy99) protein is Large ribosomal subunit protein uL22.